The chain runs to 108 residues: Large ribosomal subunit protein bL31B (108 aa).

The interval 85-108 (PKPETSVEEVLPKGKKKAPAKKKK) is disordered. Basic residues predominate over residues 97 to 108 (KGKKKAPAKKKK).

This sequence belongs to the bacterial ribosomal protein bL31 family. Type B subfamily. In terms of assembly, part of the 50S ribosomal subunit.

This is Large ribosomal subunit protein bL31B from Chlamydia muridarum (strain MoPn / Nigg).